Here is an 868-residue protein sequence, read N- to C-terminus: Protein NIP100 (868 aa).

The 51-residue stretch at 34–84 (GETQFAKGIWYGIELDKPLGKNDGSANGIRYFDIDLKKANSNGGYYGLFCK) folds into the CAP-Gly domain. Coiled-coil stretches lie at residues 101–175 (LNGN…HLDN), 207–375 (LDQT…QEEL), and 645–776 (SLLS…QIKE).

Component of the dynactin complex composed of at least ARP1, JNM1, NIP100 and ARP10. Dynactin comprises a short rod of the ARP1 filament attached to ARP10 at its pointed-end and probably associated with the capping protein at its barbed-end. The rod is implicated in dynein cargo binding. A sidearm formed by NIP100 projects from the ARP1 filament and is implicated in motor binding.

The protein localises to the cytoplasm. It localises to the cytoskeleton. The protein resides in the spindle pole. Functionally, motor-binding component of the dynactin complex which assists cytoplasmic dynein by increasing its processivity and by regulation of its cargo binding. The dynactin complex is required for the spindle translocation late in anaphase and is involved in a cell wall synthesis checkpoint. The chain is Protein NIP100 (NIP100) from Saccharomyces cerevisiae (strain ATCC 204508 / S288c) (Baker's yeast).